The sequence spans 247 residues: ATP synthase subunit a (247 aa).

Transmembrane regions (helical) follow at residues 23–43 (ISFT…TLFL), 90–110 (LFMF…VIGF), 116–136 (VIVT…IGFA), 145–165 (MFFP…IELI), 194–214 (GFVV…FAFL), and 215–235 (SAIT…FTIL).

This sequence belongs to the ATPase A chain family. In terms of assembly, F-type ATPases have 2 components, CF(1) - the catalytic core - and CF(0) - the membrane proton channel. CF(1) has five subunits: alpha(3), beta(3), gamma(1), delta(1), epsilon(1). CF(0) has three main subunits: a(1), b(2) and c(9-12). The alpha and beta chains form an alternating ring which encloses part of the gamma chain. CF(1) is attached to CF(0) by a central stalk formed by the gamma and epsilon chains, while a peripheral stalk is formed by the delta and b chains.

It localises to the cell inner membrane. In terms of biological role, key component of the proton channel; it plays a direct role in the translocation of protons across the membrane. This is ATP synthase subunit a from Paramagnetospirillum magneticum (strain ATCC 700264 / AMB-1) (Magnetospirillum magneticum).